Reading from the N-terminus, the 319-residue chain is Ribonucleoside-diphosphate reductase small chain (319 aa).

Fe cation contacts are provided by Asp-70, Glu-101, and His-104. Tyr-108 is an active-site residue. Residues Glu-163, Glu-197, and His-200 each contribute to the Fe cation site. The interaction with R1 stretch occupies residues 313–319; that stretch reads FSLDVDF.

This sequence belongs to the ribonucleoside diphosphate reductase small chain family. As to quaternary structure, interacts with RNR1/OPG080 subunit. Can interact with host RNR1 supunit. The cofactor is Fe cation.

It catalyses the reaction a 2'-deoxyribonucleoside 5'-diphosphate + [thioredoxin]-disulfide + H2O = a ribonucleoside 5'-diphosphate + [thioredoxin]-dithiol. Its function is as follows. Ribonucleoside-diphosphate reductase holoenzyme provides the precursors necessary for viral DNA synthesis. Allows virus growth in non-dividing cells. Catalyzes the biosynthesis of deoxyribonucleotides from the corresponding ribonucleotides. This Vaccinia virus (strain Ankara) (VACV) protein is Ribonucleoside-diphosphate reductase small chain (OPG048).